The primary structure comprises 201 residues: Coiled-coil domain-containing protein 195 (201 aa).

Residues 4–38 (DIQLMRLIQEMRAEIHKLEKENQALRMKLTASSQR) adopt a coiled-coil conformation. Disordered stretches follow at residues 28-72 (LRMK…DAAP) and 179-201 (SKNSSSLKHSPNQATNQLSIIAE). Positions 179 to 188 (SKNSSSLKHS) are enriched in low complexity. Polar residues predominate over residues 189-201 (PNQATNQLSIIAE).

The protein is Coiled-coil domain-containing protein 195 of Homo sapiens (Human).